The sequence spans 861 residues: Protein argonaute-3 (861 aa).

Position 1 is an N-acetylmethionine (Met1). Residues 230–349 enclose the PAZ domain; it reads PVIQFMCEVL…LPLEVCNIVA (120 aa). The Piwi domain occupies 518–820; sequence LIIVILPGKT…VAFRARYHLV (303 aa). The tract at residues 530 to 567 is interaction with guide RNA; it reads YAEVKRVGDTLLGMATQCVQVKNVIKTSPQTLSNLCLK. A divalent metal cation-binding residues include Asp598, Glu638, and Asp670. The interaction with guide RNA stretch occupies residues 758 to 806; it reads QGTSRPSHYHVLWDDNCFTADELQLLTYQPSAHTYVHCTRSVSIPAPAY. His809 is a binding site for a divalent metal cation. The segment at 824 to 847 is disordered; it reads RDSAEGSHVSGQSNGRDPQALAKA. Ser826 carries the phosphoserine modification.

It belongs to the argonaute family. Ago subfamily. As to quaternary structure, interacts with EIF4B, IMP8, PRMT5 and TNRC6B. Interacts with APOBEC3F, APOBEC3G and APOBEC3H. Interacts with EDC4. In terms of processing, ubiquitinated on surface-exposed lysines by a SCF-like E3 ubiquitin-protein ligase complex containing ZSWIM8 during target-directed microRNA degradation (TDMD), a process that mediates degradation of microRNAs (miRNAs). Ubiquitination by the SCF-like E3 ubiquitin-protein ligase complex containing ZSWIM8 leads to its subsequent degradation, thereby exposing miRNAs for degradation. ZSWIM8 recognizes and binds AGO3 when it is engaged with a TDMD target.

It is found in the cytoplasm. The protein resides in the P-body. The catalysed reaction is Endonucleolytic cleavage to 5'-phosphomonoester.. Required for RNA-mediated gene silencing (RNAi). Binds to short RNAs such as microRNAs (miRNAs) and represses the translation of mRNAs which are complementary to them. Proposed to be involved in stabilization of small RNA derivates (siRNA) derived from processed RNA polymerase III-transcribed Alu repeats containing a DR2 retinoic acid response element (RARE) in stem cells and in the subsequent siRNA-dependent degradation of a subset of RNA polymerase II-transcribed coding mRNAs by recruiting a mRNA decapping complex involving EDC4. Possesses RNA slicer activity but only on select RNAs bearing 5'- and 3'-flanking sequences to the region of guide-target complementarity. In Bos taurus (Bovine), this protein is Protein argonaute-3 (AGO3).